The primary structure comprises 339 residues: Putative adenosine/adenine deaminase (339 aa).

Positions 16, 18, and 200 each coordinate Zn(2+). His-18 contacts substrate. The Proton donor role is filled by Glu-203. Asp-281 serves as a coordination point for Zn(2+). A substrate-binding site is contributed by Asp-282.

It belongs to the metallo-dependent hydrolases superfamily. Adenosine and AMP deaminases family. The cofactor is Zn(2+).

In terms of biological role, putative nucleoside deaminase. May catalyze the hydrolytic deamination of adenosine or some similar substrate and play a role in purine metabolism. This chain is Putative adenosine/adenine deaminase, found in Streptomyces virginiae (Streptomyces cinnamonensis).